Reading from the N-terminus, the 514-residue chain is ATP synthase subunit alpha (514 aa).

An ATP-binding site is contributed by 170 to 177 (GDRQIGKT).

Belongs to the ATPase alpha/beta chains family. As to quaternary structure, F-type ATPases have 2 components, CF(1) - the catalytic core - and CF(0) - the membrane proton channel. CF(1) has five subunits: alpha(3), beta(3), gamma(1), delta(1), epsilon(1). CF(0) has three main subunits: a(1), b(2) and c(9-12). The alpha and beta chains form an alternating ring which encloses part of the gamma chain. CF(1) is attached to CF(0) by a central stalk formed by the gamma and epsilon chains, while a peripheral stalk is formed by the delta and b chains.

The protein resides in the cell inner membrane. It carries out the reaction ATP + H2O + 4 H(+)(in) = ADP + phosphate + 5 H(+)(out). Produces ATP from ADP in the presence of a proton gradient across the membrane. The alpha chain is a regulatory subunit. This chain is ATP synthase subunit alpha, found in Pseudomonas fluorescens (strain ATCC BAA-477 / NRRL B-23932 / Pf-5).